The primary structure comprises 245 residues: Sugar fermentation stimulation protein homolog (245 aa).

The protein belongs to the SfsA family.

The protein is Sugar fermentation stimulation protein homolog of Yersinia pestis bv. Antiqua (strain Nepal516).